The sequence spans 349 residues: Flap endonuclease 1-B (349 aa).

The tract at residues 1-105 (MGIKGLTKLL…GELAKRLARR (105 aa)) is N-domain. Asp-34 serves as a coordination point for Mg(2+). Arg-71 is a binding site for DNA. The Mg(2+) site is built by Asp-87, Glu-159, Glu-161, Asp-180, and Asp-182. The segment at 123 to 254 (DMEKYSKRTV…QTALKLIRQH (132 aa)) is I-domain. Position 159 (Glu-159) interacts with DNA. DNA contacts are provided by Gly-232 and Asp-234. Asp-234 contacts Mg(2+).

The protein belongs to the XPG/RAD2 endonuclease family. FEN1 subfamily. Interacts with PCNA. Three molecules of FEN1 bind to one PCNA trimer with each molecule binding to one PCNA monomer. PCNA stimulates the nuclease activity without altering cleavage specificity. Mg(2+) is required as a cofactor. In terms of processing, phosphorylated. Phosphorylation upon DNA damage induces relocalization to the nuclear plasma.

The protein localises to the nucleus. Its subcellular location is the nucleolus. The protein resides in the nucleoplasm. It is found in the mitochondrion. Its function is as follows. Structure-specific nuclease with 5'-flap endonuclease and 5'-3' exonuclease activities involved in DNA replication and repair. During DNA replication, cleaves the 5'-overhanging flap structure that is generated by displacement synthesis when DNA polymerase encounters the 5'-end of a downstream Okazaki fragment. It enters the flap from the 5'-end and then tracks to cleave the flap base, leaving a nick for ligation. Also involved in the long patch base excision repair (LP-BER) pathway, by cleaving within the apurinic/apyrimidinic (AP) site-terminated flap. Acts as a genome stabilization factor that prevents flaps from equilibrating into structures that lead to duplications and deletions. Also possesses 5'-3' exonuclease activity on nicked or gapped double-stranded DNA, and exhibits RNase H activity. Also involved in replication and repair of rDNA and in repairing mitochondrial DNA. The chain is Flap endonuclease 1-B from Physcomitrium patens (Spreading-leaved earth moss).